Here is a 195-residue protein sequence, read N- to C-terminus: Myelin-associated neurite-outgrowth inhibitor (195 aa).

The Cytoplasmic segment spans residues 1–18; that stretch reads MNPVYSPASSGVPYANPK. A helical transmembrane segment spans residues 19–43; sequence GIGYPAGFPVGYAAAAPAYSPSMYP. The Extracellular portion of the chain corresponds to 44–143; sequence GANPAFPSGY…APPIPPPRPN (100 aa). The helical transmembrane segment at 144–163 threads the bilayer; the sequence is GVTMGMVGGTTMAMSAGTLL. Over 164 to 195 the chain is Cytoplasmic; sequence TTHSPTPVAPHPSMPTYRQPATPTYSYVPPQW.

It belongs to the FAM168 family.

It is found in the cytoplasm. The protein resides in the perinuclear region. The protein localises to the cell membrane. Its subcellular location is the cell projection. It localises to the axon. Inhibitor of neuronal axonal outgrowth. The sequence is that of Myelin-associated neurite-outgrowth inhibitor (fam168b) from Danio rerio (Zebrafish).